The chain runs to 400 residues: EARP-interacting protein homolog (400 aa).

The segment at Asn-95 to Asn-114 is disordered. A compositionally biased stretch (low complexity) spans Asn-96–Asn-114. 3 WD repeats span residues Gly-138–Thr-178, Ala-227–Lys-267, and Gly-271–Asn-311. The segment covering Asn-314–Pro-333 has biased composition (low complexity). Positions Asn-314–Asn-348 are disordered. The stretch at Glu-358–Leu-397 is one WD 4 repeat.

Belongs to the WD repeat EIPR1 family.

This Dictyostelium discoideum (Social amoeba) protein is EARP-interacting protein homolog.